A 307-amino-acid chain; its full sequence is tRNA-cytidine(32) 2-sulfurtransferase (307 aa).

Residues 44–49 (SGGKDS) carry the PP-loop motif motif. [4Fe-4S] cluster contacts are provided by Cys119, Cys122, and Cys210.

This sequence belongs to the TtcA family. As to quaternary structure, homodimer. The cofactor is Mg(2+). [4Fe-4S] cluster is required as a cofactor.

It is found in the cytoplasm. The enzyme catalyses cytidine(32) in tRNA + S-sulfanyl-L-cysteinyl-[cysteine desulfurase] + AH2 + ATP = 2-thiocytidine(32) in tRNA + L-cysteinyl-[cysteine desulfurase] + A + AMP + diphosphate + H(+). Its pathway is tRNA modification. Catalyzes the ATP-dependent 2-thiolation of cytidine in position 32 of tRNA, to form 2-thiocytidine (s(2)C32). The sulfur atoms are provided by the cysteine/cysteine desulfurase (IscS) system. This is tRNA-cytidine(32) 2-sulfurtransferase from Aliivibrio fischeri (strain ATCC 700601 / ES114) (Vibrio fischeri).